A 436-amino-acid chain; its full sequence is Carboxypeptidase A5 (436 aa).

The first 33 residues, 1–33 (MQGTPGGGTRPGPSPVDRRTLLVFSFILAAALG), serve as a signal peptide directing secretion. Positions 34–126 (QMNFTGDQVL…ERQAMAKSRR (93 aa)) are cleaved as a propeptide — activation peptide. In terms of domain architecture, Peptidase M14 spans 138–431 (SYHTLEEIYS…MALRTIMEHT (294 aa)). Zn(2+) is bound by residues His196 and Glu199. Substrate contacts are provided by residues 196-199 (HSRE), Arg254, and 271-272 (NR). Residues Cys265 and Cys288 are joined by a disulfide bond. His323 is a Zn(2+) binding site. Substrate is bound by residues 324–325 (SY) and Tyr375. The Proton donor/acceptor role is filled by Glu397.

Belongs to the peptidase M14 family. Zn(2+) serves as cofactor. In terms of tissue distribution, expression is very low or not detectable.

The protein resides in the secreted. The chain is Carboxypeptidase A5 (CPA5) from Homo sapiens (Human).